We begin with the raw amino-acid sequence, 223 residues long: GTP cyclohydrolase 1 (223 aa).

Zn(2+)-binding residues include cysteine 111, histidine 114, and cysteine 182.

It belongs to the GTP cyclohydrolase I family. Homomer.

It carries out the reaction GTP + H2O = 7,8-dihydroneopterin 3'-triphosphate + formate + H(+). It functions in the pathway cofactor biosynthesis; 7,8-dihydroneopterin triphosphate biosynthesis; 7,8-dihydroneopterin triphosphate from GTP: step 1/1. The sequence is that of GTP cyclohydrolase 1 from Flavobacterium johnsoniae (strain ATCC 17061 / DSM 2064 / JCM 8514 / BCRC 14874 / CCUG 350202 / NBRC 14942 / NCIMB 11054 / UW101) (Cytophaga johnsonae).